Consider the following 529-residue polypeptide: Potassium voltage-gated channel subfamily A member 6 (529 aa).

A disordered region spans residues 1–33 (MRSEKSLTLAAPGEVRGPEGEQQDAGDFPEAGG). At 1 to 171 (MRSEKSLTLA…LLFEYPESSG (171 aa)) the chain is on the cytoplasmic side. S3 carries the post-translational modification Phosphoserine. Residues 172-193 (PARGIAIVSVLVILISIVIFCL) form a helical membrane-spanning segment. The Extracellular portion of the chain corresponds to 194 to 262 (ETLPQFRVDG…TLGGSFFTDP (69 aa)). Residues 210-220 (GVSRVSPVSRG) are compositionally biased toward low complexity. The segment at 210–233 (GVSRVSPVSRGSQEEEEDEDDSYT) is disordered. Residues 263–284 (FFLVETLCIVWFTFELLVRFSA) form a helical membrane-spanning segment. Residue C285 is the site of S-palmitoyl cysteine attachment. Residues 285–295 (CPSKPAFFRNI) lie on the Cytoplasmic side of the membrane. A helical transmembrane segment spans residues 296-316 (MNIIDLVAIFPYFITLGTELV). The Extracellular segment spans residues 317 to 337 (QQQEQQPASGGGGQNGQQAMS). A helical; Voltage-sensor transmembrane segment spans residues 338–358 (LAILRVIRLVRVFRIFKLSRH). Residues 359–373 (SKGLQILGKTLQASM) are Cytoplasmic-facing. The S4-S5 linker stretch occupies residues 360-373 (KGLQILGKTLQASM). Residues 374 to 395 (RELGLLIFFLFIGVILFSSAVY) form a helical membrane-spanning segment. At 396–409 (FAEADDDDSLFPSI) the chain is on the extracellular side. Positions 410–421 (PDAFWWAVVTMT) form an intramembrane region, helical. Positions 422-427 (TVGYGD) match the Selectivity filter motif. An intramembrane segment occupies 422-429 (TVGYGDMY). Residues 430-436 (PMTVGGK) lie on the Extracellular side of the membrane. The chain crosses the membrane as a helical span at residues 437 to 465 (IVGSLCAIAGVLTIALPVPVIVSNFNYFY). Residues 466-529 (HRETEQEEQG…YAEKRMLTEV (64 aa)) are Cytoplasmic-facing. The disordered stretch occupies residues 488-513 (DLRATDNGLGKPDFPEANRERRPSYL). The span at 500-510 (DFPEANRERRP) shows a compositional bias: basic and acidic residues. Phosphoserine; by PKA is present on S511. The short motif at 527-529 (TEV) is the PDZ-binding element.

The protein belongs to the potassium channel family. A (Shaker) (TC 1.A.1.2) subfamily. Kv1.6/KCNA6 sub-subfamily. In terms of assembly, homotetramer and heterotetramer of potassium channel proteins. Interacts with KCNAB1 and KCNAB2.

Its subcellular location is the cell membrane. The catalysed reaction is K(+)(in) = K(+)(out). Its function is as follows. Voltage-gated potassium channel that mediates transmembrane potassium transport in excitable membranes. Forms tetrameric potassium-selective channels through which potassium ions pass in accordance with their electrochemical gradient. The channel alternates between opened and closed conformations in response to the voltage difference across the membrane. Can form functional homotetrameric channels and heterotetrameric channels that contain variable proportions of KCNA1, KCNA2, KCNA4, KCNA6, and possibly other family members as well; channel properties depend on the type of alpha subunits that are part of the channel. Channel properties are modulated by cytoplasmic beta subunits that regulate the subcellular location of the alpha subunits and promote rapid inactivation. Homotetrameric channels display rapid activation and slow inactivation. This chain is Potassium voltage-gated channel subfamily A member 6 (KCNA6), found in Homo sapiens (Human).